Reading from the N-terminus, the 289-residue chain is Homeobox protein engrailed-2 (289 aa).

Composition is skewed to basic and acidic residues over residues 1–12 (MEEGGRSPREEA) and 60–83 (EFGR…ESRR). Disordered regions lie at residues 1-166 (MEEG…GNQP) and 179-206 (SDRP…PRTA). Over residues 96–114 (VPGGGGGGGGGSPGRGEGG) the composition is skewed to gly residues. Residues 142–160 (LSGAELSVSSDSDSSQAGS) are compositionally biased toward low complexity. The homeobox DNA-binding region spans 200–259 (DKRPRTAFTAEQLQRLKAEFQTNRYLTEQRRQSLAQELGLNESQIKIWFQNKRAKIKKAT).

Belongs to the engrailed homeobox family.

The protein localises to the nucleus. This Gallus gallus (Chicken) protein is Homeobox protein engrailed-2 (EN2).